The chain runs to 683 residues: MHSLFKQLVFFLVMTLTAADKAAFDAESMLEAPRRSAVVSNPLGNLGIFIESNYSFADHKYNSGIYLLNESTRNHQELLVHGKSNKALTWITDSAFLYAREDNSSSSSILLFDVNNRSERIIYNHNSSISDIRIGEKNNHYRIVFSSVDNSLVKGPSNVHVYDHLFVRHWDRWNTGSRNTLYFIELDKKTENSNYFEISSEKAIDLLKETGLESPVEPFGGLSDFDSNYDKLVFVAKDPKLNPATQTKTVVYEINLNTRNLKSLSTAKGACSSPRLAKDGNHIAWLEMQTPQYESDQNQIMVYESESGAKKHIARHWDRSPSSIEWGVFKGGEPGLFAIAENYGKQILFFVSIFHHQVIPMTEEHSVSSISVPKSSSLWLTKSSLINPPYYAKINVETLNESVLLENNVGLSPTSYEEIWFPGTHGHRIHAWIVKPESFDKSKKYPVAVLIHGGPQGSWTDSWSTRWNPAVFANAGFIVFALDPTGSTGYGQRFTDSIALDWGGKPYKDIELGVEYIKNHLSYADSEKMVALGASYGGYMINWIQGHPLGRQFRALVCHDGVFNTLNTFYNTEELYFSIHDFGGTPWENRVIYERWNPSNFVNYWATPELVIHSSKDYRLTESEGIAAFNVLQYKGIPSRLLVFEDENHWVIKPDNSLRWHKEVLSWILHYTKDCNANEDETF.

Positions 1-19 (MHSLFKQLVFFLVMTLTAA) are cleaved as a signal peptide. N-linked (GlcNAc...) asparagine glycosylation is found at Asn-53, Asn-69, Asn-103, Asn-116, Asn-126, and Asn-400. Residues Ser-535, Asp-617, and His-649 each act as charge relay system in the active site.

The protein belongs to the peptidase S9C family.

The protein localises to the secreted. The protein resides in the cytoplasm. Its subcellular location is the nucleus. The protein is Dipeptidyl-peptidase 5 of Schizosaccharomyces pombe (strain 972 / ATCC 24843) (Fission yeast).